A 296-amino-acid chain; its full sequence is Formamidopyrimidine-DNA glycosylase (296 aa).

The active-site Schiff-base intermediate with DNA is the proline 2. Glutamate 3 acts as the Proton donor in catalysis. Lysine 58 (proton donor; for beta-elimination activity) is an active-site residue. Residues histidine 106, arginine 125, and lysine 168 each coordinate DNA. The FPG-type zinc-finger motif lies at 259 to 295 (RVYDRVGHACPTKGCTGRIGRIVQGGRSTFFCETCQV). The active-site Proton donor; for delta-elimination activity is the arginine 285.

The protein belongs to the FPG family. Monomer. The cofactor is Zn(2+).

The catalysed reaction is Hydrolysis of DNA containing ring-opened 7-methylguanine residues, releasing 2,6-diamino-4-hydroxy-5-(N-methyl)formamidopyrimidine.. It carries out the reaction 2'-deoxyribonucleotide-(2'-deoxyribose 5'-phosphate)-2'-deoxyribonucleotide-DNA = a 3'-end 2'-deoxyribonucleotide-(2,3-dehydro-2,3-deoxyribose 5'-phosphate)-DNA + a 5'-end 5'-phospho-2'-deoxyribonucleoside-DNA + H(+). In terms of biological role, involved in base excision repair of DNA damaged by oxidation or by mutagenic agents. Acts as a DNA glycosylase that recognizes and removes damaged bases. Has a preference for oxidized purines, such as 7,8-dihydro-8-oxoguanine (8-oxoG). Has AP (apurinic/apyrimidinic) lyase activity and introduces nicks in the DNA strand. Cleaves the DNA backbone by beta-delta elimination to generate a single-strand break at the site of the removed base with both 3'- and 5'-phosphates. The protein is Formamidopyrimidine-DNA glycosylase of Methylorubrum populi (strain ATCC BAA-705 / NCIMB 13946 / BJ001) (Methylobacterium populi).